A 90-amino-acid polypeptide reads, in one-letter code: Auxin-responsive protein SAUR23 (90 aa).

This sequence belongs to the ARG7 family.

The protein resides in the cell membrane. Functions as a positive effector of cell expansion through modulation of auxin transport. In Arabidopsis thaliana (Mouse-ear cress), this protein is Auxin-responsive protein SAUR23.